The primary structure comprises 413 residues: Cell division protein FtsZ 2 (413 aa).

GTP-binding positions include 130–132 (GTG), Glu169, Arg173, and Asp216.

The protein belongs to the FtsZ family. Homodimer. Polymerizes to form a dynamic ring structure in a strictly GTP-dependent manner. Interacts directly with several other division proteins.

The protein resides in the cytoplasm. Functionally, essential cell division protein that forms a contractile ring structure (Z ring) at the future cell division site. The regulation of the ring assembly controls the timing and the location of cell division. One of the functions of the FtsZ ring is to recruit other cell division proteins to the septum to produce a new cell wall between the dividing cells. Binds GTP and shows GTPase activity. In Pyrococcus abyssi (strain GE5 / Orsay), this protein is Cell division protein FtsZ 2.